The sequence spans 113 residues: Large ribosomal subunit protein uL22 (113 aa).

The protein belongs to the universal ribosomal protein uL22 family. In terms of assembly, part of the 50S ribosomal subunit.

Its function is as follows. This protein binds specifically to 23S rRNA; its binding is stimulated by other ribosomal proteins, e.g. L4, L17, and L20. It is important during the early stages of 50S assembly. It makes multiple contacts with different domains of the 23S rRNA in the assembled 50S subunit and ribosome. Functionally, the globular domain of the protein is located near the polypeptide exit tunnel on the outside of the subunit, while an extended beta-hairpin is found that lines the wall of the exit tunnel in the center of the 70S ribosome. This chain is Large ribosomal subunit protein uL22, found in Roseiflexus sp. (strain RS-1).